The chain runs to 512 residues: ATP synthase subunit alpha (512 aa).

169–176 lines the ATP pocket; the sequence is GDRQTGKT.

Belongs to the ATPase alpha/beta chains family. F-type ATPases have 2 components, CF(1) - the catalytic core - and CF(0) - the membrane proton channel. CF(1) has five subunits: alpha(3), beta(3), gamma(1), delta(1), epsilon(1). CF(0) has three main subunits: a(1), b(2) and c(9-12). The alpha and beta chains form an alternating ring which encloses part of the gamma chain. CF(1) is attached to CF(0) by a central stalk formed by the gamma and epsilon chains, while a peripheral stalk is formed by the delta and b chains.

It is found in the cell membrane. It catalyses the reaction ATP + H2O + 4 H(+)(in) = ADP + phosphate + 5 H(+)(out). Produces ATP from ADP in the presence of a proton gradient across the membrane. The alpha chain is a regulatory subunit. In Buchnera aphidicola subsp. Acyrthosiphon pisum (strain 5A), this protein is ATP synthase subunit alpha.